The sequence spans 120 residues: Large ribosomal subunit protein uL22 (120 aa).

The disordered stretch occupies residues 1–25 (MFVNKKYTAKGKNLPSSPKKVRPIA).

The protein belongs to the universal ribosomal protein uL22 family. Part of the 50S ribosomal subunit.

Its function is as follows. This protein binds specifically to 23S rRNA; its binding is stimulated by other ribosomal proteins, e.g. L4, L17, and L20. It is important during the early stages of 50S assembly. It makes multiple contacts with different domains of the 23S rRNA in the assembled 50S subunit and ribosome. The globular domain of the protein is located near the polypeptide exit tunnel on the outside of the subunit, while an extended beta-hairpin is found that lines the wall of the exit tunnel in the center of the 70S ribosome. In Borrelia duttonii (strain Ly), this protein is Large ribosomal subunit protein uL22.